An 836-amino-acid chain; its full sequence is Subtilisin-like protease PIMMS2 (836 aa).

Catalysis depends on charge relay system residues D155, H222, and S414. The segment at 802 to 836 (EKKNKYNNSVLKRNEMKSHNNSQKTPKIIPRKYSR) is disordered.

It belongs to the peptidase S8 family.

Its subcellular location is the cell membrane. The enzyme catalyses Hydrolysis of proteins with broad specificity for peptide bonds, and a preference for a large uncharged residue in P1. Hydrolyzes peptide amides.. Functionally, probable serine protease which plays a role in ookinete traversal of the mosquito host midgut epithelium. In Plasmodium berghei (strain Anka), this protein is Subtilisin-like protease PIMMS2.